We begin with the raw amino-acid sequence, 117 residues long: Ribosome-binding factor A (117 aa).

It belongs to the RbfA family. Monomer. Binds 30S ribosomal subunits, but not 50S ribosomal subunits or 70S ribosomes.

It is found in the cytoplasm. One of several proteins that assist in the late maturation steps of the functional core of the 30S ribosomal subunit. Associates with free 30S ribosomal subunits (but not with 30S subunits that are part of 70S ribosomes or polysomes). Required for efficient processing of 16S rRNA. May interact with the 5'-terminal helix region of 16S rRNA. The sequence is that of Ribosome-binding factor A from Lacticaseibacillus casei (strain BL23) (Lactobacillus casei).